The sequence spans 269 residues: Putative 6-phosphogluconolactonase (269 aa).

The interval 248 to 269 (DAATGVPDRDSSDSDSPPPFDG) is disordered.

Belongs to the glucosamine/galactosamine-6-phosphate isomerase family. 6-phosphogluconolactonase subfamily.

The protein localises to the nucleus. The catalysed reaction is 6-phospho-D-glucono-1,5-lactone + H2O = 6-phospho-D-gluconate + H(+). It functions in the pathway carbohydrate degradation; pentose phosphate pathway; D-ribulose 5-phosphate from D-glucose 6-phosphate (oxidative stage): step 2/3. Hydrolysis of 6-phosphogluconolactone to 6-phosphogluconate. The protein is Putative 6-phosphogluconolactonase of Caenorhabditis elegans.